We begin with the raw amino-acid sequence, 444 residues long: Glutamyl-tRNA reductase (444 aa).

Residues 49 to 52, Ser109, 114 to 116, and Gln120 each bind substrate; these read TCNR and ETQ. Cys50 acts as the Nucleophile in catalysis. 189–194 contacts NADP(+); that stretch reads GAGKMS. Positions 425-444 are disordered; it reads KPKKQPAPAGIKEPVLAKKG.

This sequence belongs to the glutamyl-tRNA reductase family. In terms of assembly, homodimer.

It carries out the reaction (S)-4-amino-5-oxopentanoate + tRNA(Glu) + NADP(+) = L-glutamyl-tRNA(Glu) + NADPH + H(+). It participates in porphyrin-containing compound metabolism; protoporphyrin-IX biosynthesis; 5-aminolevulinate from L-glutamyl-tRNA(Glu): step 1/2. In terms of biological role, catalyzes the NADPH-dependent reduction of glutamyl-tRNA(Glu) to glutamate 1-semialdehyde (GSA). This chain is Glutamyl-tRNA reductase, found in Pelotomaculum thermopropionicum (strain DSM 13744 / JCM 10971 / SI).